A 73-amino-acid chain; its full sequence is Omega-hexatoxin-Ar1b (73 aa).

An N-terminal signal peptide occupies residues 1–22 (MNTATGFIVLLVLATVLGCIEA). The propeptide occupies 23 to 37 (GESHVREDAMGRARR). Intrachain disulfides connect Cys40–Cys54, Cys47–Cys58, and Cys53–Cys72.

Belongs to the neurotoxin 08 (Shiva) family. 01 (omega toxin) subfamily. As to expression, expressed by the venom gland.

The protein resides in the secreted. In terms of biological role, insecticidal toxin that reversibly and voltage-independently blocks both mid-low- (M-LVA) and high-voltage-activated (HVA) calcium channels (Cav) in cockroach DUM neurons. Also causes a modest block of insect sodium channel currents (Nav). Induces potent excitatory symptoms, followed by flaccid paralysis leading to death in house crickets. In Atrax robustus (Sydney funnel-web spider), this protein is Omega-hexatoxin-Ar1b.